Consider the following 199-residue polypeptide: N-(5'-phosphoribosyl)anthranilate isomerase (199 aa).

This sequence belongs to the TrpF family.

The catalysed reaction is N-(5-phospho-beta-D-ribosyl)anthranilate = 1-(2-carboxyphenylamino)-1-deoxy-D-ribulose 5-phosphate. Its pathway is amino-acid biosynthesis; L-tryptophan biosynthesis; L-tryptophan from chorismate: step 3/5. The sequence is that of N-(5'-phosphoribosyl)anthranilate isomerase from Clostridium kluyveri (strain NBRC 12016).